A 405-amino-acid polypeptide reads, in one-letter code: Phosphoglycerate kinase (405 aa).

Substrate-binding positions include 24–26 (DFN), arginine 40, 63–66 (HLGR), arginine 122, and arginine 162. Residues lysine 213, glutamate 332, and 361–364 (GGDS) contribute to the ATP site.

It belongs to the phosphoglycerate kinase family. In terms of assembly, monomer.

The protein resides in the cytoplasm. It carries out the reaction (2R)-3-phosphoglycerate + ATP = (2R)-3-phospho-glyceroyl phosphate + ADP. It functions in the pathway carbohydrate degradation; glycolysis; pyruvate from D-glyceraldehyde 3-phosphate: step 2/5. The chain is Phosphoglycerate kinase from Corynebacterium diphtheriae (strain ATCC 700971 / NCTC 13129 / Biotype gravis).